Consider the following 183-residue polypeptide: MEYLNLYKHLKKFIDSENEIIIDISENYPGLRFDINNKSGINLMIALADLSYVINHANQLKYANLLSQFRYNLFLDLKFLNNELKCNEFIDNIINQIPNNIQDYLLEFKNKNYSTDELSYIDNCDLKLKLMKKSFDEIASLSTHSQSVIELYCRIIYNDPSSFDFSVNGITLPNLKKFSNDFL.

This is an uncharacterized protein from Acanthamoeba polyphaga mimivirus (APMV).